The primary structure comprises 212 residues: Probable GTP-binding protein EngB (212 aa).

Residues 40–212 (SLPEIAFVGK…KASLAKCIKA (173 aa)) form the EngB-type G domain. GTP is bound by residues 48 to 55 (GKSNVGKS), 75 to 79 (GRTRQ), 93 to 96 (DLPG), 160 to 163 (TKSD), and 191 to 193 (VSS). Ser55 and Thr77 together coordinate Mg(2+).

This sequence belongs to the TRAFAC class TrmE-Era-EngA-EngB-Septin-like GTPase superfamily. EngB GTPase family. Mg(2+) serves as cofactor.

Its function is as follows. Necessary for normal cell division and for the maintenance of normal septation. This chain is Probable GTP-binding protein EngB, found in Rickettsia akari (strain Hartford).